The sequence spans 1088 residues: Exportin-T (1088 aa).

A compositionally biased stretch (low complexity) spans lysine 435–asparagine 503. 2 disordered regions span residues lysine 435 to aspartate 513 and leucine 1059 to histidine 1088.

Belongs to the exportin family.

Its subcellular location is the nucleus. The protein resides in the cytoplasm. Functionally, mediates the nuclear export of aminoacylated tRNAs. This chain is Exportin-T (xpot), found in Dictyostelium discoideum (Social amoeba).